Consider the following 106-residue polypeptide: Photosystem II 5 kDa protein, chloroplastic (106 aa).

A chloroplast-targeting transit peptide spans 1–76 (MASITMMSSF…ACSVAKTAMA (76 aa)). The cysteines at positions 95 and 104 are disulfide-linked.

In terms of processing, disulfide bond. As to expression, expressed in midvein, lamina and periphery of leaves (at protein level).

The protein resides in the plastid. The protein localises to the chloroplast thylakoid membrane. Functionally, may be a component of the oxygen-evolving complex. This is Photosystem II 5 kDa protein, chloroplastic from Petunia hybrida (Petunia).